The following is a 351-amino-acid chain: UDP-N-acetylenolpyruvoylglucosamine reductase (351 aa).

The region spanning 11–213 is the FAD-binding PCMH-type domain; it reads GVGGSIACFI…KQVRDQVLRI (203 aa). Arg-158 is a catalytic residue. Ser-239 serves as the catalytic Proton donor. Glu-343 is a catalytic residue.

The protein belongs to the MurB family. FAD is required as a cofactor.

It localises to the cytoplasm. The enzyme catalyses UDP-N-acetyl-alpha-D-muramate + NADP(+) = UDP-N-acetyl-3-O-(1-carboxyvinyl)-alpha-D-glucosamine + NADPH + H(+). It functions in the pathway cell wall biogenesis; peptidoglycan biosynthesis. Cell wall formation. The sequence is that of UDP-N-acetylenolpyruvoylglucosamine reductase from Tropheryma whipplei (strain TW08/27) (Whipple's bacillus).